We begin with the raw amino-acid sequence, 451 residues long: Enolase (451 aa).

Gln163 is a (2R)-2-phosphoglycerate binding site. The active-site Proton donor is the Glu205. 3 residues coordinate Mg(2+): Asp258, Glu308, and Asp335. The (2R)-2-phosphoglycerate site is built by Lys360, Arg389, Ser390, and Lys411. Catalysis depends on Lys360, which acts as the Proton acceptor.

Belongs to the enolase family. Requires Mg(2+) as cofactor.

It is found in the cytoplasm. The protein resides in the secreted. Its subcellular location is the cell surface. It carries out the reaction (2R)-2-phosphoglycerate = phosphoenolpyruvate + H2O. Its pathway is carbohydrate degradation; glycolysis; pyruvate from D-glyceraldehyde 3-phosphate: step 4/5. Functionally, catalyzes the reversible conversion of 2-phosphoglycerate (2-PG) into phosphoenolpyruvate (PEP). It is essential for the degradation of carbohydrates via glycolysis. The chain is Enolase from Mycoplasma capricolum subsp. capricolum (strain California kid / ATCC 27343 / NCTC 10154).